A 420-amino-acid polypeptide reads, in one-letter code: 3-phosphoshikimate 1-carboxyvinyltransferase (420 aa).

The interval 1–24 is disordered; the sequence is MTRTAKLTIIPPGRPLSGRAMPPG. 3-phosphoshikimate is bound by residues K26, S27, and R31. K26 contributes to the phosphoenolpyruvate binding site. The phosphoenolpyruvate site is built by G97 and R125. Positions 170, 171, 172, 297, 320, and 324 each coordinate 3-phosphoshikimate. Q172 lines the phosphoenolpyruvate pocket. The active-site Proton acceptor is D297. Phosphoenolpyruvate-binding residues include R328, R375, and K400.

It belongs to the EPSP synthase family. In terms of assembly, monomer.

The protein localises to the cytoplasm. It carries out the reaction 3-phosphoshikimate + phosphoenolpyruvate = 5-O-(1-carboxyvinyl)-3-phosphoshikimate + phosphate. The protein operates within metabolic intermediate biosynthesis; chorismate biosynthesis; chorismate from D-erythrose 4-phosphate and phosphoenolpyruvate: step 6/7. Functionally, catalyzes the transfer of the enolpyruvyl moiety of phosphoenolpyruvate (PEP) to the 5-hydroxyl of shikimate-3-phosphate (S3P) to produce enolpyruvyl shikimate-3-phosphate and inorganic phosphate. The polypeptide is 3-phosphoshikimate 1-carboxyvinyltransferase (Rhizobium etli (strain CIAT 652)).